The chain runs to 69 residues: MGMRMMFTVFLLVVLATTVVSFTSDSAFDSRNVAANDKVSDMIALTARRTCCSRPTCRMEYPELCGGRR.

The first 21 residues, Met1–Ser21, serve as a signal peptide directing secretion. Positions Phe22–Arg48 are excised as a propeptide. 2 disulfide bridges follow: Cys51–Cys57 and Cys52–Cys65. A ser-Xaa-Pro motif, crucial for potent interaction with nAChR region spans residues Ser53–Pro55. Pro55 is subject to 4-hydroxyproline; in form Sr1A and Sr1B. A 4-carboxyglutamate; in form Sr1A modification is found at Glu60. The residue at position 63 (Glu63) is a 4-carboxyglutamate; in form Sr1A and Sr1B. Glycine amide; in form Sr1A and Sr1B is present on Gly66.

This sequence belongs to the conotoxin A superfamily. Post-translationally, occurs in 2 forms which differ in the post-translational modification of Glu-60. In form SrA1 Glu-60 is 4-carboxyglutamate while in form SrA2 Glu-60 is unmodified. Expressed by the venom duct.

It is found in the secreted. In terms of biological role, alpha-conotoxins act on postsynaptic membranes, they bind to the nicotinic acetylcholine receptors (nAChR) and thus inhibit them. Has weak blocking effects on muscle nAChR composed of alpha-1/beta-1/gamma/delta subunits and the central nervous system nAChR composed of alpha-4/beta-2 subunits. Does not detectably affect the peripheral nervous system nAChR composed of alpha-3/beta-4 subunits. Low toxin concentrations potentiate currents in muscle nAChR composed of alpha-1/beta-1/gamma/delta subunits and central nervous system nAChR composed of alpha-4/beta-2 subunits, but not the peripheral nervous system nAChR composed of alpha-3/beta-4 subunits. This is Alpha-conotoxin SrIA/SrIB from Conus spurius (Alphabet cone).